The sequence spans 204 residues: Gellan lyase (204 aa).

As to quaternary structure, multimer.

Its subcellular location is the secreted. It catalyses the reaction Eliminative cleavage of beta-D-glucopyranosyl-(1-&gt;4)-beta-D-glucopyranosyluronate bonds of gellan backbone releasing tetrasaccharides containing a 4-deoxy-4,5-unsaturated D-glucopyranosyluronic acid at the non-reducing end. The tetrasaccharide produced from deacetylated gellan is beta-D-4-deoxy-Delta(4)-GlcAp-(1-&gt;4)-beta-D-Glcp-(1-&gt;4)-alpha-L-Rhap-(1-&gt;3)-beta-D-Glcp.. Activity is stimulated by zinc, potassium, lithium, cobalt, sodium, calcium, iron, manganase, magnesium and mercury ions at a concentration of 1 mM, but inhibited by copper ions at a concentration of 1 mM. Activity is inhibited by potassium, sodium and magnesium ions at a concentration of 1 M. Activity is inhibited by urea, EDTA, dithiothreitol, p-CMB, PSF, natrium lauryl sulfate and N-bromosuccinimide. Functionally, cleaves the glycosidic bonds of gellan backbone and releases tetrasaccharide units of glucuronyl-glucosyl-rhamnosyl-glucose with unsaturated glucuronic acid at the non-reducing terminal. The enzyme is highly specific to the heteropolysaccharide gellan. This is Gellan lyase from Geobacillus stearothermophilus (Bacillus stearothermophilus).